Reading from the N-terminus, the 192-residue chain is Adenylate kinase (192 aa).

ATP is bound at residue 12–17 (GSGKTT). The segment at 34 to 63 (STGDLLRAEVASGSELGKTIDSFISKGNLV) is NMP. AMP is bound by residues Thr35, Arg40, 61–63 (NLV), 88–91 (GYPR), and Gln95. The tract at residues 130 to 136 (GRNRGAD) is LID. Arg131 contributes to the ATP binding site. AMP-binding residues include Arg133 and Arg145. Residue Arg173 participates in ATP binding.

Belongs to the adenylate kinase family. As to quaternary structure, monomer.

Its subcellular location is the cytoplasm. It carries out the reaction AMP + ATP = 2 ADP. Its pathway is purine metabolism; AMP biosynthesis via salvage pathway; AMP from ADP: step 1/1. Functionally, catalyzes the reversible transfer of the terminal phosphate group between ATP and AMP. Plays an important role in cellular energy homeostasis and in adenine nucleotide metabolism. This is Adenylate kinase from Campylobacter jejuni subsp. jejuni serotype O:2 (strain ATCC 700819 / NCTC 11168).